Here is a 274-residue protein sequence, read N- to C-terminus: Rhamnulose-1-phosphate aldolase (274 aa).

Glu117 is an active-site residue. Zn(2+)-binding residues include His141, His143, and His212.

Belongs to the aldolase class II family. RhaD subfamily. Homotetramer. It depends on Zn(2+) as a cofactor.

Its subcellular location is the cytoplasm. It catalyses the reaction L-rhamnulose 1-phosphate = (S)-lactaldehyde + dihydroxyacetone phosphate. It functions in the pathway carbohydrate degradation; L-rhamnose degradation; glycerone phosphate from L-rhamnose: step 3/3. In terms of biological role, catalyzes the reversible cleavage of L-rhamnulose-1-phosphate to dihydroxyacetone phosphate (DHAP) and L-lactaldehyde. The protein is Rhamnulose-1-phosphate aldolase of Escherichia coli O17:K52:H18 (strain UMN026 / ExPEC).